The sequence spans 334 residues: Geranylgeranyl pyrophosphate synthase idtG (334 aa).

3 residues coordinate isopentenyl diphosphate: K49, R52, and H81. The Mg(2+) site is built by D88 and D92. Position 97 (R97) interacts with dimethylallyl diphosphate. R98 is a binding site for isopentenyl diphosphate. The dimethylallyl diphosphate site is built by K175, T176, and Q209. D212 provides a ligand contact to Mg(2+). Residues N216, K226, and K236 each coordinate dimethylallyl diphosphate.

This sequence belongs to the FPP/GGPP synthase family. The cofactor is Mg(2+).

It catalyses the reaction isopentenyl diphosphate + dimethylallyl diphosphate = (2E)-geranyl diphosphate + diphosphate. The catalysed reaction is isopentenyl diphosphate + (2E)-geranyl diphosphate = (2E,6E)-farnesyl diphosphate + diphosphate. It carries out the reaction isopentenyl diphosphate + (2E,6E)-farnesyl diphosphate = (2E,6E,10E)-geranylgeranyl diphosphate + diphosphate. It functions in the pathway secondary metabolite biosynthesis. Its function is as follows. Geranylgeranyl pyrophosphate synthase; part of the gene cluster that mediates the biosynthesis of paspalitrems, indole-diterpene (IDT) mycotoxins that are potent tremorgens in mammals. The geranylgeranyl diphosphate (GGPP) synthase idtG is proposed to catalyze the first step in IDT biosynthesis via catalysis of a series of iterative condensations of isopentenyl diphosphate (IPP) with dimethylallyl diphosphate (DMAPP), geranyl diphosphate (GPP), and farnesyl diphosphate (FPP), to form GGPP. Condensation of indole-3-glycerol phosphate with GGPP by the prenyltransferase idtC then forms 3-geranylgeranylindole (3-GGI). Epoxidation of the two terminal alkenes of the geranylgeranyl moiety by the FAD-dependent monooxygenase idtM, and cyclization by the terpene cyclase idtB then leads to the production of paspaline. The cytochrome P450 monooxygenase idtP then catalyzes oxidative elimination of the pendant methyl group at C-12 of paspaline and generates the C-10 ketone to yield 13-desoxypaxilline. The cytochrome P450 monooxygenase idtQ may catalyze the C-13 oxidation of 13-desoxypaxilline to afford paxilline. Considering that both paspalicine and paxilline were detected in C.paspali, idtQ also catalyzes the formation of paspalinine from 13-desoxypaxilline via paspalicine as an intermediate. Finally, the alpha-prenyltransferase idtF prenylates paspalinine at the C-20 or the C-21 positions to yield paspalitrems A and C, respectively. The hydroxylation of paspalitrem A at C-32 by a still unknown oxidase affords paspalitrem B. This is Geranylgeranyl pyrophosphate synthase idtG from Claviceps paspali (Rye ergot fungus).